The chain runs to 58 residues: Small ribosomal subunit protein bS21 (58 aa).

This sequence belongs to the bacterial ribosomal protein bS21 family.

The chain is Small ribosomal subunit protein bS21 from Latilactobacillus sakei subsp. sakei (strain 23K) (Lactobacillus sakei subsp. sakei).